Here is a 204-residue protein sequence, read N- to C-terminus: Methylthioribulose-1-phosphate dehydratase (204 aa).

Zn(2+) contacts are provided by histidine 94 and histidine 96.

This sequence belongs to the aldolase class II family. MtnB subfamily. Zn(2+) serves as cofactor.

It catalyses the reaction 5-(methylsulfanyl)-D-ribulose 1-phosphate = 5-methylsulfanyl-2,3-dioxopentyl phosphate + H2O. It functions in the pathway amino-acid biosynthesis; L-methionine biosynthesis via salvage pathway; L-methionine from S-methyl-5-thio-alpha-D-ribose 1-phosphate: step 2/6. Catalyzes the dehydration of methylthioribulose-1-phosphate (MTRu-1-P) into 2,3-diketo-5-methylthiopentyl-1-phosphate (DK-MTP-1-P). This chain is Methylthioribulose-1-phosphate dehydratase, found in Serratia proteamaculans (strain 568).